A 123-amino-acid chain; its full sequence is Small ribosomal subunit protein uS12 (123 aa).

The segment at Met1 to Lys30 is disordered. Over residues Arg9–Ser21 the composition is skewed to basic residues. Position 89 is a 3-methylthioaspartic acid (Asp89).

It belongs to the universal ribosomal protein uS12 family. In terms of assembly, part of the 30S ribosomal subunit. Contacts proteins S8 and S17. May interact with IF1 in the 30S initiation complex.

Functionally, with S4 and S5 plays an important role in translational accuracy. Interacts with and stabilizes bases of the 16S rRNA that are involved in tRNA selection in the A site and with the mRNA backbone. Located at the interface of the 30S and 50S subunits, it traverses the body of the 30S subunit contacting proteins on the other side and probably holding the rRNA structure together. The combined cluster of proteins S8, S12 and S17 appears to hold together the shoulder and platform of the 30S subunit. The protein is Small ribosomal subunit protein uS12 of Paracoccus denitrificans (strain Pd 1222).